We begin with the raw amino-acid sequence, 495 residues long: ATP-NADH kinase YEF1 (495 aa).

Residues 442–480 are disordered; that stretch reads KYRLDSSKNGNDTISNPLESSCISSDAQDEERKSVTETE. The segment covering 448–467 has biased composition (polar residues); it reads SKNGNDTISNPLESSCISSD.

The protein belongs to the NAD kinase family. In terms of assembly, homooctamer. It depends on Mg(2+) as a cofactor. Mn(2+) serves as cofactor. Co(2+) is required as a cofactor. The cofactor is Ca(2+).

It carries out the reaction NADH + ATP = ADP + NADPH + H(+). In terms of biological role, ATP-NADH kinase with a low phosphorylation activity of both NADH and NAD(+) to produce NADP and NADPH by using ATP. UTR1 is responsible for essentially all of the NAD/NADH kinase activity resident in the cytoplasm, whereas POS5 is responsible for all mitochondrial NAD/NADH kinase activity and consequent mitochondrial genome maintenance. YEF1 can substitute for UTR1 when overexpressed. In Saccharomyces cerevisiae (strain ATCC 204508 / S288c) (Baker's yeast), this protein is ATP-NADH kinase YEF1 (YEF1).